A 264-amino-acid polypeptide reads, in one-letter code: Protein-lysine methyltransferase METTL21C (264 aa).

The span at 1 to 10 (MDVCLSSAQQ) shows a compositional bias: polar residues. The tract at residues 1–46 (MDVCLSSAQQPGRRGEGLSSPGGWLEAEKKGAPQKDSTGGVLEESN) is disordered. S-adenosyl-L-methionine-binding positions include Trp92, 120 to 122 (GAG), Asp141, Trp172, and Ser193.

Belongs to the methyltransferase superfamily. METTL21 family. In terms of assembly, interacts with members of the heat shock protein 70 families; these proteins may possibly be methylation substrates for the enzyme.

It is found in the nucleus. Its subcellular location is the cytoplasm. The catalysed reaction is L-lysyl-[protein] + S-adenosyl-L-methionine = N(6)-methyl-L-lysyl-[protein] + S-adenosyl-L-homocysteine + H(+). It catalyses the reaction N(6)-methyl-L-lysyl-[protein] + S-adenosyl-L-methionine = N(6),N(6)-dimethyl-L-lysyl-[protein] + S-adenosyl-L-homocysteine + H(+). The enzyme catalyses N(6),N(6)-dimethyl-L-lysyl-[protein] + S-adenosyl-L-methionine = N(6),N(6),N(6)-trimethyl-L-lysyl-[protein] + S-adenosyl-L-homocysteine + H(+). In terms of biological role, protein-lysine N-methyltransferase using S-adenosyl-L-methionine as methyl donor. Mono-di and trimethylates 'Lys-943' of AARS1. This chain is Protein-lysine methyltransferase METTL21C, found in Homo sapiens (Human).